The sequence spans 288 residues: Solute carrier family 25 member 45 (288 aa).

Solcar repeat units lie at residues 1 to 83 (MPVE…TLLA), 97 to 191 (PSYT…LCRQ), and 199 to 286 (PSSA…LLRL). 6 helical membrane-spanning segments follow: residues 6 to 26 (FVAG…FDTV), 58 to 78 (GMSF…GVYS), 102 to 122 (IFIA…PFDL), 166 to 186 (GSWA…VTYE), 202 to 222 (ATVL…ATPF), and 266 to 286 (SARA…LLRL).

The protein belongs to the mitochondrial carrier (TC 2.A.29) family. As to expression, widely expressed, with highest levels in testis, liver and kidney and low levels in brain, including cortex, cerebellum, hippocampus and hypothalamus, and heart.

It is found in the mitochondrion inner membrane. This is Solute carrier family 25 member 45 (Slc25a45) from Mus musculus (Mouse).